Reading from the N-terminus, the 243-residue chain is Segregation and condensation protein A (243 aa).

Belongs to the ScpA family. As to quaternary structure, component of a cohesin-like complex composed of ScpA, ScpB and the Smc homodimer, in which ScpA and ScpB bind to the head domain of Smc. The presence of the three proteins is required for the association of the complex with DNA.

Its subcellular location is the cytoplasm. In terms of biological role, participates in chromosomal partition during cell division. May act via the formation of a condensin-like complex containing Smc and ScpB that pull DNA away from mid-cell into both cell halves. The polypeptide is Segregation and condensation protein A (Halothermothrix orenii (strain H 168 / OCM 544 / DSM 9562)).